A 278-amino-acid polypeptide reads, in one-letter code: UPF0276 protein Ssed_2857 (278 aa).

Belongs to the UPF0276 family.

This Shewanella sediminis (strain HAW-EB3) protein is UPF0276 protein Ssed_2857.